A 152-amino-acid polypeptide reads, in one-letter code: Superoxide dismutase [Cu-Zn] 2 (152 aa).

His-45, His-47, and His-62 together coordinate Cu cation. A disulfide bond links Cys-56 and Cys-145. Positions 62, 70, 79, and 82 each coordinate Zn(2+). His-119 is a Cu cation binding site.

It belongs to the Cu-Zn superoxide dismutase family. Homodimer. Cu cation serves as cofactor. It depends on Zn(2+) as a cofactor.

It localises to the cytoplasm. It carries out the reaction 2 superoxide + 2 H(+) = H2O2 + O2. Functionally, destroys radicals which are normally produced within the cells and which are toxic to biological systems. This Solanum lycopersicum (Tomato) protein is Superoxide dismutase [Cu-Zn] 2 (SODCC.5).